We begin with the raw amino-acid sequence, 397 residues long: Purine ribonucleoside efflux pump NepI (397 aa).

The Cytoplasmic portion of the chain corresponds to 1–21; the sequence is MNENIAEKFRADGVARPNWSA. Residues 22 to 42 form a helical membrane-spanning segment; it reads VFAVAFCVACLITVEFLPVSL. At 43 to 54 the chain is on the periplasmic side; it reads LTPMAQDLGISE. A helical transmembrane segment spans residues 55–75; the sequence is GIAGQSVTVTAFVAMFSSLFI. The Cytoplasmic segment spans residues 76 to 85; sequence TQIIQATDRR. A helical transmembrane segment spans residues 86 to 106; it reads YIVILFAVLLTASCLMVSFAN. Position 107 (S107) is a topological domain, periplasmic. Residues 108 to 128 form a helical membrane-spanning segment; that stretch reads FTLLLLGRACLGLALGGFWAM. The Cytoplasmic portion of the chain corresponds to 129–147; that stretch reads SASLTMRLVPARTVPKALS. The chain crosses the membrane as a helical span at residues 148–168; the sequence is VIFGAVSIALVIAAPLGSFLG. Residues 169–175 lie on the Periplasmic side of the membrane; that stretch reads GIIGWRN. Residues 176 to 196 form a helical membrane-spanning segment; sequence VFNAAAVMGVLCVIWVVKSLP. Residues 197–215 lie on the Cytoplasmic side of the membrane; the sequence is SLPGEPSHQKQNMFSLLQR. A helical transmembrane segment spans residues 216 to 236; the sequence is PGVMAGMIAIFMSFAGQFAFF. Residues 237 to 255 lie on the Periplasmic side of the membrane; the sequence is TYIRPVYMNLAGFDVDGLT. A helical membrane pass occupies residues 256 to 276; that stretch reads LVLLSFGIASFVGTSFSSYVL. The Cytoplasmic portion of the chain corresponds to 277-281; sequence KRSVK. A helical membrane pass occupies residues 282–302; sequence LALAGAPLLLALSALTLIVWG. Topologically, residues 303-305 are periplasmic; that stretch reads SDK. The chain crosses the membrane as a helical span at residues 306–326; that stretch reads TVAAVIAIIWGLAFALVPVGW. Residues 327 to 343 are Cytoplasmic-facing; that stretch reads STWITRSLADQAEKAGS. A helical transmembrane segment spans residues 344–364; sequence IQVAVIQLANTCGAAVGGYAL. Residues 365-366 lie on the Periplasmic side of the membrane; it reads DN. The chain crosses the membrane as a helical span at residues 367-387; the sequence is FGLLSPLALSGCLMLLTALVV. Residues 388-397 are Cytoplasmic-facing; it reads AAKVRITPMS.

It belongs to the major facilitator superfamily. DHA1 family. NepI (TC 2.A.1.2.26) subfamily.

The protein resides in the cell inner membrane. The enzyme catalyses inosine(in) + H(+)(out) = inosine(out) + H(+)(in). The catalysed reaction is guanosine(in) + H(+)(out) = guanosine(out) + H(+)(in). In terms of biological role, involved in the efflux of purine ribonucleosides, such as inosine and guanosine. The chain is Purine ribonucleoside efflux pump NepI from Salmonella enteritidis PT4 (strain P125109).